Here is a 105-residue protein sequence, read N- to C-terminus: Large ribosomal subunit protein eL36 (105 aa).

The interval 1 to 20 (MAKEAPAKTGLAVGLNKGHK) is disordered.

It belongs to the eukaryotic ribosomal protein eL36 family.

In Trichoderma hamatum, this protein is Large ribosomal subunit protein eL36 (rpl36).